We begin with the raw amino-acid sequence, 462 residues long: Mitochondrial-processing peptidase subunit beta (462 aa).

Residues 1–20 constitute a mitochondrion transit peptide; sequence MFSRTASKFRNTRRLLSTIS. Histidine 70 provides a ligand contact to Zn(2+). The active-site Proton acceptor is the glutamate 73. Zn(2+) is bound by residues histidine 74 and glutamate 150. At serine 243 the chain carries Phosphoserine.

The protein belongs to the peptidase M16 family. In terms of assembly, heterodimer of MAS2 (alpha) and MAS1 (beta) subunits, forming the mitochondrial processing protease (MPP) in which MAS2 is involved in substrate recognition and binding and MAS1 is the catalytic subunit. Zn(2+) serves as cofactor.

It localises to the mitochondrion matrix. It catalyses the reaction Release of N-terminal transit peptides from precursor proteins imported into the mitochondrion, typically with Arg in position P2.. Binding to MAS2 is required for catalytic activity. Inhibited by high levels (&gt; 1uM) of zinc. Inhibited by metal chelators ethylenediaminetetraacetic acid (EDTA) and O-phenanthroline. Functionally, catalytic subunit of the essential mitochondrial processing protease (MPP), which cleaves the mitochondrial sequence off newly imported precursors proteins. Preferentially, cleaves after an arginine at position P2. The protein is Mitochondrial-processing peptidase subunit beta of Saccharomyces cerevisiae (strain ATCC 204508 / S288c) (Baker's yeast).